The chain runs to 957 residues: ERC protein 2 (957 aa).

Polar residues predominate over residues 1–13 (MYGSARTITNLEG). Positions 1–44 (MYGSARTITNLEGSPSRSPRLPRSPRLGHRRTSSGGGGGTGKTL) are disordered. A compositionally biased stretch (low complexity) spans 14–25 (SPSRSPRLPRSP). Ser65 and Ser666 each carry phosphoserine. Residues 140–917 (RQVRDSTMLD…RMKLMADNYD (778 aa)) are a coiled coil. The disordered stretch occupies residues 918–957 (DDHHHYHHHHHHHHHRSPGRSQHSNHRPSPDQDDEEGIWA). Over residues 922–943 (HYHHHHHHHHHRSPGRSQHSNH) the composition is skewed to basic residues. Acidic residues predominate over residues 948–957 (DQDDEEGIWA).

As to quaternary structure, interacts with BSN, ERC1, PPFIA1, PPFIA2, PPFIA3 and PPFIA4. Interacts through its C-terminus with the PDZ domain of RIMS1. Part of a complex consisting of ERC2, RIMS1 and UNC13A.

It is found in the cytoplasm. The protein resides in the synapse. It localises to the presynaptic active zone. Its subcellular location is the cytoskeleton. Thought to be involved in the organization of the cytomatrix at the nerve terminals active zone (CAZ) which regulates neurotransmitter release. Seems to act together with BSN. May recruit liprin-alpha proteins to the CAZ. This is ERC protein 2 (ERC2) from Homo sapiens (Human).